The primary structure comprises 514 residues: Maturase K (514 aa).

Belongs to the intron maturase 2 family. MatK subfamily.

The protein resides in the plastid. The protein localises to the chloroplast. Functionally, usually encoded in the trnK tRNA gene intron. Probably assists in splicing its own and other chloroplast group II introns. The polypeptide is Maturase K (Acer monspessulanum (Montpellier maple)).